Reading from the N-terminus, the 336-residue chain is Peroxidase 11 (336 aa).

The N-terminal stretch at 1–20 (MMRLLFVFFMVHTIFIPCFS) is a signal peptide. Disulfide bonds link Cys-39/Cys-119, Cys-72/Cys-77, Cys-125/Cys-331, and Cys-204/Cys-236. His-70 serves as the catalytic Proton acceptor. The Ca(2+) site is built by Asp-71, Val-74, Gly-76, Asp-78, and Ser-80. A substrate-binding site is contributed by Pro-167. His-197 serves as a coordination point for heme b. Residue Thr-198 participates in Ca(2+) binding. Asn-246 carries N-linked (GlcNAc...) asparagine glycosylation. Ca(2+) is bound by residues Asp-251, Thr-254, and Asp-259.

It belongs to the peroxidase family. Classical plant (class III) peroxidase subfamily. Requires heme b as cofactor. It depends on Ca(2+) as a cofactor. As to expression, expressed in roots and stems.

The protein localises to the secreted. The catalysed reaction is 2 a phenolic donor + H2O2 = 2 a phenolic radical donor + 2 H2O. In terms of biological role, removal of H(2)O(2), oxidation of toxic reductants, biosynthesis and degradation of lignin, suberization, auxin catabolism, response to environmental stresses such as wounding, pathogen attack and oxidative stress. These functions might be dependent on each isozyme/isoform in each plant tissue. This chain is Peroxidase 11 (PER11), found in Arabidopsis thaliana (Mouse-ear cress).